Reading from the N-terminus, the 314-residue chain is tRNA-cytidine(32) 2-sulfurtransferase (314 aa).

Positions 57–62 (SGGKDS) match the PP-loop motif motif. 3 residues coordinate [4Fe-4S] cluster: Cys-132, Cys-135, and Cys-223.

The protein belongs to the TtcA family. Homodimer. It depends on Mg(2+) as a cofactor. The cofactor is [4Fe-4S] cluster.

Its subcellular location is the cytoplasm. The catalysed reaction is cytidine(32) in tRNA + S-sulfanyl-L-cysteinyl-[cysteine desulfurase] + AH2 + ATP = 2-thiocytidine(32) in tRNA + L-cysteinyl-[cysteine desulfurase] + A + AMP + diphosphate + H(+). The protein operates within tRNA modification. Catalyzes the ATP-dependent 2-thiolation of cytidine in position 32 of tRNA, to form 2-thiocytidine (s(2)C32). The sulfur atoms are provided by the cysteine/cysteine desulfurase (IscS) system. The protein is tRNA-cytidine(32) 2-sulfurtransferase of Alkalilimnicola ehrlichii (strain ATCC BAA-1101 / DSM 17681 / MLHE-1).